A 555-amino-acid chain; its full sequence is Hydroxylamine reductase (555 aa).

Cys3, Cys6, Cys18, and Cys25 together coordinate [4Fe-4S] cluster. Residues His252, Glu276, Cys320, Cys407, Cys435, Cys460, Glu494, and Lys496 each contribute to the hybrid [4Fe-2O-2S] cluster site. Cys407 carries the cysteine persulfide modification.

The protein belongs to the HCP family. [4Fe-4S] cluster serves as cofactor. Hybrid [4Fe-2O-2S] cluster is required as a cofactor.

Its subcellular location is the cytoplasm. The catalysed reaction is A + NH4(+) + H2O = hydroxylamine + AH2 + H(+). Its function is as follows. Catalyzes the reduction of hydroxylamine to form NH(3) and H(2)O. In Burkholderia ambifaria (strain MC40-6), this protein is Hydroxylamine reductase.